A 248-amino-acid polypeptide reads, in one-letter code: ATP synthase subunit a, chloroplastic (248 aa).

Transmembrane regions (helical) follow at residues 37–57, 96–116, 134–154, 200–220, and 221–241; these read AQVL…AILA, VPFI…GALL, DINT…YAGL, LVVA…MMFL, and GLFT…AYIG.

Belongs to the ATPase A chain family. F-type ATPases have 2 components, CF(1) - the catalytic core - and CF(0) - the membrane proton channel. CF(1) has five subunits: alpha(3), beta(3), gamma(1), delta(1), epsilon(1). CF(0) has four main subunits: a, b, b' and c.

It localises to the plastid. The protein localises to the chloroplast thylakoid membrane. Key component of the proton channel; it plays a direct role in the translocation of protons across the membrane. This chain is ATP synthase subunit a, chloroplastic, found in Anthoceros angustus (Hornwort).